The sequence spans 121 residues: Large ribosomal subunit protein bL19 (121 aa).

Belongs to the bacterial ribosomal protein bL19 family.

This protein is located at the 30S-50S ribosomal subunit interface and may play a role in the structure and function of the aminoacyl-tRNA binding site. The polypeptide is Large ribosomal subunit protein bL19 (Symbiobacterium thermophilum (strain DSM 24528 / JCM 14929 / IAM 14863 / T)).